A 222-amino-acid polypeptide reads, in one-letter code: UPF0173 metal-dependent hydrolase Mboo_0816 (222 aa).

The protein belongs to the UPF0173 family.

This is UPF0173 metal-dependent hydrolase Mboo_0816 from Methanoregula boonei (strain DSM 21154 / JCM 14090 / 6A8).